The following is a 914-amino-acid chain: Penicillin-binding protein 1A/1B (914 aa).

A disordered region spans residues 1-29; that stretch reads MSDQFNSREARRKANSKSSPSPKKGKKRK. The Cytoplasmic segment spans residues 1–37; the sequence is MSDQFNSREARRKANSKSSPSPKKGKKRKKGGLFKKT. A helical; Signal-anchor for type II membrane protein membrane pass occupies residues 38–58; the sequence is LFTLLILFVLGVVGGAVTFAV. Topologically, residues 59-914 are extracellular; that stretch reads MVSDAPSLDE…TNSSSIEKTN (856 aa). Residues 77 to 246 form a transglycosylase region; that stretch reads STIYDKNGKE…TAYNPVKNPD (170 aa). E115 (proton donor; for transglycosylase activity) is an active-site residue. The interval 329 to 662 is transpeptidase; that stretch reads TKAQDKLDEL…PDSVVEATVE (334 aa). S390 functions as the Acyl-ester intermediate; for transpeptidase activity in the catalytic mechanism. A Fibronectin type-III domain is found at 708–795; it reads KLSGLNVKYD…SYEVPKAEDD (88 aa). Positions 773–914 are disordered; that stretch reads TAVSDDGKST…TNSSSIEKTN (142 aa). Residues 798–828 are compositionally biased toward basic and acidic residues; it reads KKDQQQTDDEKQDDEKTQDDTQTDDSQKDDG. A compositionally biased stretch (acidic residues) spans 829–840; the sequence is QTDQDQTDDSTN. 2 stretches are compositionally biased toward low complexity: residues 848-892 and 900-914; these read NTNT…GSDT and SNKT…EKTN.

In the N-terminal section; belongs to the glycosyltransferase 51 family. It in the C-terminal section; belongs to the transpeptidase family. In terms of processing, the product expressed from the translation of the ponA gene appears as two bands on a gel (1A and 1B), but the specific amino acid sequence of each protein is unknown. Post-translationally, the N-terminus is blocked.

Its subcellular location is the cell membrane. It is found in the forespore inner membrane. It carries out the reaction [GlcNAc-(1-&gt;4)-Mur2Ac(oyl-L-Ala-gamma-D-Glu-L-Lys-D-Ala-D-Ala)](n)-di-trans,octa-cis-undecaprenyl diphosphate + beta-D-GlcNAc-(1-&gt;4)-Mur2Ac(oyl-L-Ala-gamma-D-Glu-L-Lys-D-Ala-D-Ala)-di-trans,octa-cis-undecaprenyl diphosphate = [GlcNAc-(1-&gt;4)-Mur2Ac(oyl-L-Ala-gamma-D-Glu-L-Lys-D-Ala-D-Ala)](n+1)-di-trans,octa-cis-undecaprenyl diphosphate + di-trans,octa-cis-undecaprenyl diphosphate + H(+). It catalyses the reaction Preferential cleavage: (Ac)2-L-Lys-D-Ala-|-D-Ala. Also transpeptidation of peptidyl-alanyl moieties that are N-acyl substituents of D-alanine.. It functions in the pathway cell wall biogenesis; peptidoglycan biosynthesis. Functionally, cell wall formation. Synthesis of cross-linked peptidoglycan from the lipid intermediates. The enzyme has a penicillin-insensitive transglycosylase N-terminal domain (formation of linear glycan strands) and a penicillin-sensitive transpeptidase C-terminal domain (cross-linking of the peptide subunits). Required for vegetative growth. Has a partially redundant function with PBP-2A (pbpA) during spore outgrowth. The protein is Penicillin-binding protein 1A/1B (ponA) of Bacillus subtilis (strain 168).